The following is a 79-amino-acid chain: Small ribosomal subunit protein bS18 (79 aa).

This sequence belongs to the bacterial ribosomal protein bS18 family. Part of the 30S ribosomal subunit. Forms a tight heterodimer with protein bS6.

Its function is as follows. Binds as a heterodimer with protein bS6 to the central domain of the 16S rRNA, where it helps stabilize the platform of the 30S subunit. This is Small ribosomal subunit protein bS18 from Renibacterium salmoninarum (strain ATCC 33209 / DSM 20767 / JCM 11484 / NBRC 15589 / NCIMB 2235).